Consider the following 266-residue polypeptide: Interleukin-1 beta (266 aa).

The propeptide occupies Met1 to Asp113.

Belongs to the IL-1 family. As to quaternary structure, monomer. In its precursor form, weakly interacts with full-length MEFV; the mature cytokine does not interact at all. Interacts with integrins ITGAV:ITGBV and ITGA5:ITGB1; integrin-binding is required for IL1B signaling. Interacts with cargo receptor TMED10; the interaction is direct and is required for the secretion of IL1B mature form. Interacts with HSP90AB1; the interaction facilitates cargo translocation into the ERGIC. Interacts with HSP90B1; the interaction facilitates cargo translocation into the ERGIC.

It localises to the cytoplasm. It is found in the cytosol. The protein resides in the secreted. Its subcellular location is the lysosome. The protein localises to the extracellular exosome. Potent pro-inflammatory cytokine. Initially discovered as the major endogenous pyrogen, induces prostaglandin synthesis, neutrophil influx and activation, T-cell activation and cytokine production, B-cell activation and antibody production, and fibroblast proliferation and collagen production. Promotes Th17 differentiation of T-cells. Synergizes with IL12/interleukin-12 to induce IFNG synthesis from T-helper 1 (Th1) cells. Plays a role in angiogenesis by inducing VEGF production synergistically with TNF and IL6. Involved in transduction of inflammation downstream of pyroptosis: its mature form is specifically released in the extracellular milieu by passing through the gasdermin-D (GSDMD) pore. In Bubalus carabanensis (Swamp type water buffalo), this protein is Interleukin-1 beta (IL1B).